A 362-amino-acid chain; its full sequence is Glutamine synthetase (362 aa).

Residues 26–107 enclose the GS beta-grasp domain; it reads LIAEYIWIDS…VLSECWNADG (82 aa). The region spanning 114 to 362 is the GS catalytic domain; it reads HRHEAAKLME…METCFGAVSE (249 aa).

The protein belongs to the glutamine synthetase family. In terms of assembly, homooctamer.

Its subcellular location is the cytoplasm. The catalysed reaction is L-glutamate + NH4(+) + ATP = L-glutamine + ADP + phosphate + H(+). This is Glutamine synthetase (gln-1) from Neurospora crassa (strain ATCC 24698 / 74-OR23-1A / CBS 708.71 / DSM 1257 / FGSC 987).